A 211-amino-acid polypeptide reads, in one-letter code: Uracil phosphoribosyltransferase (211 aa).

Residues arginine 79, arginine 104, and 131–139 (DPMLATGGS) each bind 5-phospho-alpha-D-ribose 1-diphosphate. Uracil is bound by residues isoleucine 196 and 201–203 (GDA). Aspartate 202 serves as a coordination point for 5-phospho-alpha-D-ribose 1-diphosphate.

This sequence belongs to the UPRTase family. Mg(2+) serves as cofactor.

It carries out the reaction UMP + diphosphate = 5-phospho-alpha-D-ribose 1-diphosphate + uracil. It functions in the pathway pyrimidine metabolism; UMP biosynthesis via salvage pathway; UMP from uracil: step 1/1. Its activity is regulated as follows. Allosterically activated by GTP. Functionally, catalyzes the conversion of uracil and 5-phospho-alpha-D-ribose 1-diphosphate (PRPP) to UMP and diphosphate. The sequence is that of Uracil phosphoribosyltransferase from Lactococcus lactis subsp. lactis (strain IL1403) (Streptococcus lactis).